The chain runs to 159 residues: 2-C-methyl-D-erythritol 2,4-cyclodiphosphate synthase (159 aa).

2 residues coordinate a divalent metal cation: D8 and H10. 4-CDP-2-C-methyl-D-erythritol 2-phosphate is bound by residues 8–10 (DVH) and 34–35 (HS). H42 contacts a divalent metal cation. Residues 56-58 (DIG), 132-135 (TTTE), and R142 contribute to the 4-CDP-2-C-methyl-D-erythritol 2-phosphate site.

It belongs to the IspF family. As to quaternary structure, homotrimer. A divalent metal cation serves as cofactor.

The enzyme catalyses 4-CDP-2-C-methyl-D-erythritol 2-phosphate = 2-C-methyl-D-erythritol 2,4-cyclic diphosphate + CMP. The protein operates within isoprenoid biosynthesis; isopentenyl diphosphate biosynthesis via DXP pathway; isopentenyl diphosphate from 1-deoxy-D-xylulose 5-phosphate: step 4/6. Its function is as follows. Involved in the biosynthesis of isopentenyl diphosphate (IPP) and dimethylallyl diphosphate (DMAPP), two major building blocks of isoprenoid compounds. Catalyzes the conversion of 4-diphosphocytidyl-2-C-methyl-D-erythritol 2-phosphate (CDP-ME2P) to 2-C-methyl-D-erythritol 2,4-cyclodiphosphate (ME-CPP) with a corresponding release of cytidine 5-monophosphate (CMP). This chain is 2-C-methyl-D-erythritol 2,4-cyclodiphosphate synthase, found in Chlorobium phaeobacteroides (strain BS1).